The chain runs to 166 residues: Phosphopantetheine adenylyltransferase (166 aa).

Serine 11 lines the substrate pocket. Residues 11-12 and histidine 19 each bind ATP; that span reads SF. Lysine 43, alanine 76, and arginine 90 together coordinate substrate. ATP-binding positions include 91–93, glutamate 101, and 126–132; these read GLR and YRYFSSS.

The protein belongs to the bacterial CoaD family. In terms of assembly, homohexamer. The cofactor is Mg(2+).

Its subcellular location is the cytoplasm. The enzyme catalyses (R)-4'-phosphopantetheine + ATP + H(+) = 3'-dephospho-CoA + diphosphate. It participates in cofactor biosynthesis; coenzyme A biosynthesis; CoA from (R)-pantothenate: step 4/5. In terms of biological role, reversibly transfers an adenylyl group from ATP to 4'-phosphopantetheine, yielding dephospho-CoA (dPCoA) and pyrophosphate. The protein is Phosphopantetheine adenylyltransferase of Streptococcus mutans serotype c (strain ATCC 700610 / UA159).